The chain runs to 741 residues: Ethylene receptor (741 aa).

3 helical membrane-spanning segments follow: residues 23-43 (ISDF…IYFV), 53-73 (WVLV…LINL), and 92-112 (VLTA…IPDL). Cu cation is bound by residues Cys65 and His69. One can recognise a GAF domain in the interval 158-307 (DRHTILKTTL…VVADQVAVAL (150 aa)). In terms of domain architecture, Histidine kinase spans 350 to 589 (VMNHEMRTPM…TFIVKLGFPE (240 aa)). At His353 the chain carries Phosphohistidine; by autocatalysis. The region spanning 615 to 732 (KVLVMDDNGV…KMRSVLSELL (118 aa)) is the Response regulatory domain. 4-aspartylphosphate is present on Asp663.

Belongs to the ethylene receptor family. As to quaternary structure, homodimer; disulfide-linked. It depends on Cu cation as a cofactor. Post-translationally, activation probably requires a transfer of a phosphate group between a His in the transmitter domain and an Asp of the receiver domain.

It is found in the endoplasmic reticulum membrane. It catalyses the reaction ATP + protein L-histidine = ADP + protein N-phospho-L-histidine.. May act early in the ethylene signal transduction pathway, possibly as an ethylene receptor, or as a regulator of the pathway. This is Ethylene receptor (ETR1) from Malus domestica (Apple).